Reading from the N-terminus, the 226-residue chain is Ribonuclease 3 (226 aa).

The RNase III domain maps to 6–128 (INKLQRKLGY…LIGGVFLDSD (123 aa)). Glutamate 41 lines the Mg(2+) pocket. Aspartate 45 is an active-site residue. Mg(2+)-binding residues include aspartate 114 and glutamate 117. The active site involves glutamate 117. The 71-residue stretch at 155–225 (DPKTRLQEYL…AEQALIKLGL (71 aa)) folds into the DRBM domain.

It belongs to the ribonuclease III family. Homodimer. Mg(2+) is required as a cofactor.

The protein localises to the cytoplasm. It carries out the reaction Endonucleolytic cleavage to 5'-phosphomonoester.. In terms of biological role, digests double-stranded RNA. Involved in the processing of primary rRNA transcript to yield the immediate precursors to the large and small rRNAs (23S and 16S). Processes some mRNAs, and tRNAs when they are encoded in the rRNA operon. Processes pre-crRNA and tracrRNA of type II CRISPR loci if present in the organism. This Pantoea ananatis (strain LMG 20103) protein is Ribonuclease 3 (rnc).